Consider the following 161-residue polypeptide: Phosphopantetheine adenylyltransferase (161 aa).

Thr10 is a binding site for substrate. Residues 10 to 11 (TF) and His18 contribute to the ATP site. Substrate is bound by residues Lys42, Leu75, and Arg89. ATP contacts are provided by residues 90–92 (GLR), Glu100, and 125–131 (YSFLSSS).

This sequence belongs to the bacterial CoaD family. Homohexamer. Mg(2+) serves as cofactor.

The protein resides in the cytoplasm. The enzyme catalyses (R)-4'-phosphopantetheine + ATP + H(+) = 3'-dephospho-CoA + diphosphate. It participates in cofactor biosynthesis; coenzyme A biosynthesis; CoA from (R)-pantothenate: step 4/5. In terms of biological role, reversibly transfers an adenylyl group from ATP to 4'-phosphopantetheine, yielding dephospho-CoA (dPCoA) and pyrophosphate. The polypeptide is Phosphopantetheine adenylyltransferase (Thermodesulfovibrio yellowstonii (strain ATCC 51303 / DSM 11347 / YP87)).